Here is a 283-residue protein sequence, read N- to C-terminus: uncharacterized protein (283 aa).

The Proton donor role is filled by Tyr55.

It belongs to the aldo/keto reductase family.

It is found in the cytoplasm. The protein resides in the nucleus. This is an uncharacterized protein from Schizosaccharomyces pombe (strain 972 / ATCC 24843) (Fission yeast).